We begin with the raw amino-acid sequence, 377 residues long: Homoserine O-succinyltransferase (377 aa).

Residues 45 to 356 (NAVLVCHALN…PHGHDAFLLD (312 aa)) enclose the AB hydrolase-1 domain. Ser151 (nucleophile) is an active-site residue. Arg221 is a substrate binding site. Active-site residues include Asp317 and His350. Asp351 is a substrate binding site.

It belongs to the AB hydrolase superfamily. MetX family. Homodimer.

It localises to the cytoplasm. The enzyme catalyses L-homoserine + succinyl-CoA = O-succinyl-L-homoserine + CoA. It functions in the pathway amino-acid biosynthesis; L-methionine biosynthesis via de novo pathway; O-succinyl-L-homoserine from L-homoserine: step 1/1. In terms of biological role, transfers a succinyl group from succinyl-CoA to L-homoserine, forming succinyl-L-homoserine. The polypeptide is Homoserine O-succinyltransferase (Leptothrix cholodnii (strain ATCC 51168 / LMG 8142 / SP-6) (Leptothrix discophora (strain SP-6))).